Consider the following 357-residue polypeptide: Alanine racemase (357 aa).

Lys-34 functions as the Proton acceptor; specific for D-alanine in the catalytic mechanism. An N6-(pyridoxal phosphate)lysine modification is found at Lys-34. Substrate is bound at residue Arg-129. Tyr-254 serves as the catalytic Proton acceptor; specific for L-alanine. Residue Met-302 participates in substrate binding.

Belongs to the alanine racemase family. Pyridoxal 5'-phosphate serves as cofactor.

It carries out the reaction L-alanine = D-alanine. The protein operates within amino-acid biosynthesis; D-alanine biosynthesis; D-alanine from L-alanine: step 1/1. Its function is as follows. Catalyzes the interconversion of L-alanine and D-alanine. Likely plays an important role in supplying D-alanine, which is an indispensable constituent in the biosynthesis of bacterial cell-wall peptidoglycan. This is Alanine racemase from Aeromonas hydrophila subsp. hydrophila (strain ATCC 7966 / DSM 30187 / BCRC 13018 / CCUG 14551 / JCM 1027 / KCTC 2358 / NCIMB 9240 / NCTC 8049).